Reading from the N-terminus, the 320-residue chain is Protein rlx (320 aa).

Its function is as follows. This protein is probably required for relaxation complex formation and plasmid mobilization by conjugative plasmids. This is Protein rlx (rlx) from Staphylococcus aureus.